The sequence spans 146 residues: 3-dehydroquinate dehydratase (146 aa).

The active-site Proton acceptor is Tyr23. Asn74, His80, and Asp87 together coordinate substrate. His100 acts as the Proton donor in catalysis. Substrate is bound by residues 101–102 and Arg111; that span reads IS.

It belongs to the type-II 3-dehydroquinase family. Homododecamer.

It catalyses the reaction 3-dehydroquinate = 3-dehydroshikimate + H2O. It participates in metabolic intermediate biosynthesis; chorismate biosynthesis; chorismate from D-erythrose 4-phosphate and phosphoenolpyruvate: step 3/7. In terms of biological role, catalyzes a trans-dehydration via an enolate intermediate. The chain is 3-dehydroquinate dehydratase from Bacillus cytotoxicus (strain DSM 22905 / CIP 110041 / 391-98 / NVH 391-98).